The chain runs to 328 residues: Flap endonuclease 1 (328 aa).

The interval 1 to 98 (MGVKLRDVVS…ETVSRRADIR (98 aa)) is N-domain. Positions 27, 80, 152, 154, 173, 175, and 226 each coordinate Mg(2+). The I-domain stretch occupies residues 116-247 (RAKKYAVRSS…RGLKLIREKG (132 aa)). The tract at residues 320 to 328 (TQKSLEDWF) is interaction with PCNA.

The protein belongs to the XPG/RAD2 endonuclease family. FEN1 subfamily. Interacts with PCNA. PCNA stimulates the nuclease activity without altering cleavage specificity. The cofactor is Mg(2+).

Structure-specific nuclease with 5'-flap endonuclease and 5'-3' exonuclease activities involved in DNA replication and repair. During DNA replication, cleaves the 5'-overhanging flap structure that is generated by displacement synthesis when DNA polymerase encounters the 5'-end of a downstream Okazaki fragment. Binds the unpaired 3'-DNA end and kinks the DNA to facilitate 5' cleavage specificity. Cleaves one nucleotide into the double-stranded DNA from the junction in flap DNA, leaving a nick for ligation. Also involved in the base excision repair (BER) pathway. Acts as a genome stabilization factor that prevents flaps from equilibrating into structures that lead to duplications and deletions. Also possesses 5'-3' exonuclease activity on nicked or gapped double-stranded DNA. This Methanothermobacter thermautotrophicus (strain ATCC 29096 / DSM 1053 / JCM 10044 / NBRC 100330 / Delta H) (Methanobacterium thermoautotrophicum) protein is Flap endonuclease 1.